A 296-amino-acid polypeptide reads, in one-letter code: Acetylglutamate kinase (296 aa).

Substrate contacts are provided by residues 68-69, arginine 90, and asparagine 193; that span reads GG.

It belongs to the acetylglutamate kinase family. ArgB subfamily.

It localises to the cytoplasm. The enzyme catalyses N-acetyl-L-glutamate + ATP = N-acetyl-L-glutamyl 5-phosphate + ADP. Its pathway is amino-acid biosynthesis; L-arginine biosynthesis; N(2)-acetyl-L-ornithine from L-glutamate: step 2/4. Catalyzes the ATP-dependent phosphorylation of N-acetyl-L-glutamate. The polypeptide is Acetylglutamate kinase (Acidothermus cellulolyticus (strain ATCC 43068 / DSM 8971 / 11B)).